A 311-amino-acid polypeptide reads, in one-letter code: MGESKTTTGEGFGFYKEYVAGMMAGLATVAVGHPFDTVKVKLQKHNTDVQGLRYKNGLHCASRILQTEGVKGLYRGATSSFMGMAFESSLMFGIYSQAKLFLRGTLPDDGPRPEIIVPSAMFGGAIISFVLCPTELVKCRMQIQGTDSLVPNFRRYNSPLDCAVQTVKNDGVTGIFRGGSATLLRECTGNAVFFTVYEYLRYHIHSRLEDSKLKDGYLVDMGIGVLTGGLGGIACWSAVLPFDVAKTIIQTSSEKATERNPFKVLSSIHKRAGLKGCYAGLGPTIVRAFPANAAAIVAWEFSMKMLGIKRD.

Solcar repeat units lie at residues 12 to 101, 111 to 203, and 219 to 305; these read FGFY…AKLF, PRPE…LRYH, and VDMG…SMKM. The next 6 helical transmembrane spans lie at 18–38, 76–96, 113–133, 178–197, 222–242, and 288–308; these read YVAG…FDTV, GATS…GIYS, PEII…VLCP, GGSA…FTVY, GIGV…VLPF, and AFPA…MLGI.

This sequence belongs to the mitochondrial carrier (TC 2.A.29) family. In terms of tissue distribution, high expression in flowers and siliques. Lower expression in leaves and stems.

The protein localises to the mitochondrion inner membrane. Inhibited by mercuric chloride. In terms of biological role, mitochondrial arginine transporter that catalyzes the counter-exchange of arginine with lysine, ornithine, arginine and histidine. Substrate preference in reconstituted proteoliposomes is arginine &gt; lysine &gt; ornithine &gt; histidine. May be involved in the delivery of arginine, released from seed reserves, to mitochondrial arginase and the export of ornithine. The protein is Mitochondrial arginine transporter BAC1 (BAC1) of Arabidopsis thaliana (Mouse-ear cress).